A 151-amino-acid polypeptide reads, in one-letter code: Small ribosomal subunit protein uS15y (151 aa).

The protein belongs to the universal ribosomal protein uS15 family.

This is Small ribosomal subunit protein uS15y from Oryza sativa subsp. japonica (Rice).